A 203-amino-acid chain; its full sequence is Holliday junction branch migration complex subunit RuvA (203 aa).

Positions 1–63 (MIDYLRGTLT…EDVIRLYGFR (63 aa)) are domain I. The segment at 64 to 142 (TKEKRSLFEK…ELHPGLFSQK (79 aa)) is domain II. Residues 143–152 (EEQPKPHEKN) are flexible linker. Residues 153–203 (DGNQALDEAMEALKALGYVEKELKKVKPKLEQETLTTDAYIKKALQLMLNR) form a domain III region.

The protein belongs to the RuvA family. In terms of assembly, homotetramer. Forms an RuvA(8)-RuvB(12)-Holliday junction (HJ) complex. HJ DNA is sandwiched between 2 RuvA tetramers; dsDNA enters through RuvA and exits via RuvB. An RuvB hexamer assembles on each DNA strand where it exits the tetramer. Each RuvB hexamer is contacted by two RuvA subunits (via domain III) on 2 adjacent RuvB subunits; this complex drives branch migration. In the full resolvosome a probable DNA-RuvA(4)-RuvB(12)-RuvC(2) complex forms which resolves the HJ.

It is found in the cytoplasm. Its function is as follows. The RuvA-RuvB-RuvC complex processes Holliday junction (HJ) DNA during genetic recombination and DNA repair, while the RuvA-RuvB complex plays an important role in the rescue of blocked DNA replication forks via replication fork reversal (RFR). RuvA specifically binds to HJ cruciform DNA, conferring on it an open structure. The RuvB hexamer acts as an ATP-dependent pump, pulling dsDNA into and through the RuvAB complex. HJ branch migration allows RuvC to scan DNA until it finds its consensus sequence, where it cleaves and resolves the cruciform DNA. This Halalkalibacterium halodurans (strain ATCC BAA-125 / DSM 18197 / FERM 7344 / JCM 9153 / C-125) (Bacillus halodurans) protein is Holliday junction branch migration complex subunit RuvA.